The primary structure comprises 78 residues: MSKVCIVTGKRPATGNNVSHAQNKTRRRFLPNLHTHRFWVESENKYIKLKVSSKGMRIIDKKGIDTVLSDLRAQGHKI.

The protein belongs to the bacterial ribosomal protein bL28 family.

This chain is Large ribosomal subunit protein bL28, found in Francisella philomiragia subsp. philomiragia (strain ATCC 25017 / CCUG 19701 / FSC 153 / O#319-036).